The sequence spans 285 residues: Putative cysteine-rich repeat secretory protein 14 (285 aa).

A signal peptide spans 1–30; sequence MSSFCLSKHLILVPILVMMAQLLLIRNVLS. Gnk2-homologous domains follow at residues 37–143 and 161–273; these read YLYH…SIST and RPNA…RYPF.

It belongs to the cysteine-rich repeat secretory protein family.

The protein resides in the secreted. This is Putative cysteine-rich repeat secretory protein 14 (CRRSP14) from Arabidopsis thaliana (Mouse-ear cress).